The sequence spans 1101 residues: Leucine-rich repeat receptor-like serine/threonine-protein kinase At1g17230 (1101 aa).

The first 23 residues, 1 to 23, serve as a signal peptide directing secretion; sequence MRGRICFLAIVILCSFSFILVRS. The Extracellular segment spans residues 24–734; it reads LNEEGRVLLE…WLINGSQRQK (711 aa). Residues Asn-39, Asn-57, Asn-78, and Asn-97 are each glycosylated (N-linked (GlcNAc...) asparagine). LRR repeat units lie at residues 66-90, 91-115, 117-137, 138-162, 163-186, 188-210, 211-234, 235-258, 260-282, 283-306, 308-329, 330-354, 355-379, 381-402, 403-426, 427-450, 451-474, 476-498, 499-522, 524-546, 548-569, 570-593, 595-618, 619-643, 644-667, and 669-692; these read LRTVTSVDLNGMNLSGTLSPLICKL, HGLRKLNVSTNFISGPIPQDLSLCR, LEVLDLCTNRFHGVIPIQLTM, IITLKKLYLCENYLFGSIPRQIGNL, SSLQELVIYSNNLTGVIPPSMAKL, QLRIIRAGRNGFSGVIPSEISGC, ESLKVLGLAENLLEGSLPKQLEKL, QNLTDLILWQNRLSGEIPPSVGNI, RLEVLALHENYFTGSIPREIGKL, TKMKRLYLYTNQLTGEIPREIGNL, DAAEIDFSENQLTGFIPKEFGH, ILNLKLLHLFENILLGPIPRELGEL, TLLEKLDLSINRLNGTIPQELQFLP, LVDLQLFDNQLEGKIPPLIGFY, SNFSVLDMSANSLSGPIPAHFCRF, QTLILLSLGSNKLSGNIPRDLKTC, KSLTKLMLGDNQLTGSLPIELFNL, NLTALELHQNWLSGNISADLGKL, KNLERLRLANNNFTGEIPPEIGNL, KIVGFNISSNQLTGHIPKELGSC, TIQRLDLSGNKFSGYIAQELGQ, LVYLEILRLSDNRLTGEIPHSFGD, TRLMELQLGGNLLSENIPVELGKL, TSLQISLNISHNNLSGTIPDSLGNL, QMLEILYLNDNKLSGEIPASIGNL, and SLLICNISNNNLVGTVPDTAVFQR. 2 N-linked (GlcNAc...) asparagine glycosylation sites follow: Asn-161 and Asn-174. N-linked (GlcNAc...) asparagine glycosylation is found at Asn-236 and Asn-257. The N-linked (GlcNAc...) asparagine glycan is linked to Asn-368. Residue Asn-404 is glycosylated (N-linked (GlcNAc...) asparagine). Asn-476, Asn-490, Asn-510, Asn-521, and Asn-529 each carry an N-linked (GlcNAc...) asparagine glycan. N-linked (GlcNAc...) asparagine glycosylation is found at Asn-626 and Asn-631. 2 N-linked (GlcNAc...) asparagine glycosylation sites follow: Asn-674 and Asn-728. A helical transmembrane segment spans residues 735 to 755; the sequence is ILTITCIVIGSVFLITFLGLC. Topologically, residues 756-1101 are cytoplasmic; it reads WTIKRREPAF…LEEANSSKEI (346 aa). 2 positions are modified to phosphothreonine: Thr-788 and Thr-796. The Protein kinase domain occupies 799-1081; sequence FSEDVVLGRG…ITEARGSSSL (283 aa). ATP contacts are provided by residues 805–813 and Lys-827; that span reads LGRGACGTV. 2 positions are modified to phosphotyrosine: Tyr-874 and Tyr-913. The active-site Proton acceptor is the Asp-926. Position 960 is a phosphoserine (Ser-960). Phosphotyrosine is present on residues Tyr-968 and Tyr-975. At Thr-976 the chain carries Phosphothreonine. The disordered stretch occupies residues 1076-1101; the sequence is RGSSSLSSSSITSETPLEEANSSKEI. Over residues 1078-1088 the composition is skewed to low complexity; that stretch reads SSSLSSSSITS.

The protein belongs to the protein kinase superfamily. Ser/Thr protein kinase family.

It is found in the cell membrane. The enzyme catalyses L-seryl-[protein] + ATP = O-phospho-L-seryl-[protein] + ADP + H(+). It carries out the reaction L-threonyl-[protein] + ATP = O-phospho-L-threonyl-[protein] + ADP + H(+). In Arabidopsis thaliana (Mouse-ear cress), this protein is Leucine-rich repeat receptor-like serine/threonine-protein kinase At1g17230.